A 379-amino-acid chain; its full sequence is MKLSETLKIDYFRVQLNAWRICGALDLSEGRYWSWSMLLCILVYLPTPMLLRGVYSFEDPVENNFSLSLTVTSLSNLMKFCMYVAQLTKMVEVQSLIGQLDARVSGESQSERHRNMTEHLLRMSKLFQITYAVVFIIAAVPFVFETELSLPMPMWFPFDWKNSMVAYIGALVFQEIGYVFQIMQCFAADSFPPLVLYLISEQCQLLILRISEIGYGYKTLEENEQDLVNCIRDQNALYRLLDVTKSLVSYPMMVQFMVIGINIAITLFVLIFYVETLYDRIYYLCFLLGITVQTYPLCYYGTMVQESFAELHYAVFCSNWVDQSASYRGHMLILAERTKRMQLLLAGNLVPIHLSTYVACWKGAYSFFTLMADRDGLGS.

Residues 1–36 (MKLSETLKIDYFRVQLNAWRICGALDLSEGRYWSWS) are Cytoplasmic-facing. A helical membrane pass occupies residues 37–57 (MLLCILVYLPTPMLLRGVYSF). The Extracellular segment spans residues 58-64 (EDPVENN). N64 is a glycosylation site (N-linked (GlcNAc...) asparagine). The chain crosses the membrane as a helical span at residues 65-85 (FSLSLTVTSLSNLMKFCMYVA). At 86–125 (QLTKMVEVQSLIGQLDARVSGESQSERHRNMTEHLLRMSK) the chain is on the cytoplasmic side. A helical transmembrane segment spans residues 126–146 (LFQITYAVVFIIAAVPFVFET). The Extracellular segment spans residues 147–162 (ELSLPMPMWFPFDWKN). A helical membrane pass occupies residues 163 to 183 (SMVAYIGALVFQEIGYVFQIM). Residues 184–253 (QCFAADSFPP…TKSLVSYPMM (70 aa)) lie on the Cytoplasmic side of the membrane. Residues 254–274 (VQFMVIGINIAITLFVLIFYV) form a helical membrane-spanning segment. The Extracellular segment spans residues 275–280 (ETLYDR). Residues 281 to 301 (IYYLCFLLGITVQTYPLCYYG) traverse the membrane as a helical segment. The Cytoplasmic segment spans residues 302-340 (TMVQESFAELHYAVFCSNWVDQSASYRGHMLILAERTKR). Residues 341–361 (MQLLLAGNLVPIHLSTYVACW) form a helical membrane-spanning segment. At 362 to 379 (KGAYSFFTLMADRDGLGS) the chain is on the extracellular side.

It belongs to the insect chemoreceptor superfamily. Heteromeric odorant receptor channel (TC 1.A.69) family. Or2a subfamily. In terms of assembly, interacts with Orco. Complexes exist early in the endomembrane system in olfactory sensory neurons (OSNs), coupling these complexes to the conserved ciliary trafficking pathway. As to expression, expressed in 10-40 sensory cells in the third antenna segment and in the maxillary palp.

Its subcellular location is the cell membrane. In terms of biological role, odorant receptor which mediates acceptance or avoidance behavior, depending on its substrates. The odorant receptor repertoire encodes a large collection of odor stimuli that vary widely in identity, intensity, and duration. May form a complex with Orco to form odorant-sensing units, providing sensitive and prolonged odorant signaling and calcium permeability. In Drosophila melanogaster (Fruit fly), this protein is Odorant receptor 23a (Or23a).